We begin with the raw amino-acid sequence, 127 residues long: Small ribosomal subunit protein uS11 (127 aa).

This sequence belongs to the universal ribosomal protein uS11 family. Part of the 30S ribosomal subunit.

In terms of biological role, located on the platform of the 30S subunit. This chain is Small ribosomal subunit protein uS11, found in Halobacterium salinarum (strain ATCC 700922 / JCM 11081 / NRC-1) (Halobacterium halobium).